Consider the following 337-residue polypeptide: tRNA N6-adenosine threonylcarbamoyltransferase (337 aa).

Residues His111 and His115 each coordinate Fe cation. Substrate contacts are provided by residues 134 to 138, Asp167, Gly180, and Asn272; that span reads LVSGG. Asp300 provides a ligand contact to Fe cation.

Belongs to the KAE1 / TsaD family. Fe(2+) is required as a cofactor.

The protein resides in the cytoplasm. It catalyses the reaction L-threonylcarbamoyladenylate + adenosine(37) in tRNA = N(6)-L-threonylcarbamoyladenosine(37) in tRNA + AMP + H(+). In terms of biological role, required for the formation of a threonylcarbamoyl group on adenosine at position 37 (t(6)A37) in tRNAs that read codons beginning with adenine. Is involved in the transfer of the threonylcarbamoyl moiety of threonylcarbamoyl-AMP (TC-AMP) to the N6 group of A37, together with TsaE and TsaB. TsaD likely plays a direct catalytic role in this reaction. The sequence is that of tRNA N6-adenosine threonylcarbamoyltransferase from Escherichia coli (strain K12 / MC4100 / BW2952).